A 202-amino-acid polypeptide reads, in one-letter code: Orotate phosphoribosyltransferase (202 aa).

Residues Lys93 and 113–121 (EDIITTGGS) each bind 5-phospho-alpha-D-ribose 1-diphosphate. Residues Thr117 and Arg145 each coordinate orotate.

Belongs to the purine/pyrimidine phosphoribosyltransferase family. PyrE subfamily. As to quaternary structure, homodimer. It depends on Mg(2+) as a cofactor.

The enzyme catalyses orotidine 5'-phosphate + diphosphate = orotate + 5-phospho-alpha-D-ribose 1-diphosphate. Its pathway is pyrimidine metabolism; UMP biosynthesis via de novo pathway; UMP from orotate: step 1/2. Catalyzes the transfer of a ribosyl phosphate group from 5-phosphoribose 1-diphosphate to orotate, leading to the formation of orotidine monophosphate (OMP). This Campylobacter jejuni subsp. jejuni serotype O:23/36 (strain 81-176) protein is Orotate phosphoribosyltransferase.